The chain runs to 312 residues: Nodulation protein D 2 (312 aa).

Residues 6–63 (LDLNLLVALDALMTKRSVTAAARSINLSQPAMSAAIARLRTYFGDDLFTMRGRELIPT) form the HTH lysR-type domain. The H-T-H motif DNA-binding region spans 23–42 (VTAAARSINLSQPAMSAAIA).

Belongs to the LysR transcriptional regulatory family.

In terms of biological role, represses the expression of the nodABCIJ-nolO-noeI operon. This is Nodulation protein D 2 (nodD2) from Sinorhizobium fredii (strain NBRC 101917 / NGR234).